The following is a 296-amino-acid chain: Cytidine deaminase (296 aa).

CMP/dCMP-type deaminase domains are found at residues D48–V168 and Q187–E296. N89 to E91 serves as a coordination point for substrate. Zn(2+) is bound at residue H102. E104 serves as the catalytic Proton donor. 2 residues coordinate Zn(2+): C129 and C132.

Belongs to the cytidine and deoxycytidylate deaminase family. In terms of assembly, homodimer. It depends on Zn(2+) as a cofactor.

It catalyses the reaction cytidine + H2O + H(+) = uridine + NH4(+). The catalysed reaction is 2'-deoxycytidine + H2O + H(+) = 2'-deoxyuridine + NH4(+). In terms of biological role, this enzyme scavenges exogenous and endogenous cytidine and 2'-deoxycytidine for UMP synthesis. This Pectobacterium atrosepticum (strain SCRI 1043 / ATCC BAA-672) (Erwinia carotovora subsp. atroseptica) protein is Cytidine deaminase.